A 237-amino-acid chain; its full sequence is Zinc finger AN1 domain-containing stress-associated protein 14 (237 aa).

The tract at residues 1–31 is disordered; the sequence is MATKRKCPANGDDGGVADLEPVAGGSFASPP. The segment at 171 to 217 adopts an AN1-type zinc-finger fold; sequence QPEANRCATCRRKVGLTGFKCRCGGTFCGGHRYADEHGCGFDYKSSG. 8 residues coordinate Zn(2+): Cys177, Cys180, Cys191, Cys193, Cys198, His201, His207, and Cys209.

In terms of biological role, may be involved in environmental stress response. This Oryza sativa subsp. japonica (Rice) protein is Zinc finger AN1 domain-containing stress-associated protein 14 (SAP14).